We begin with the raw amino-acid sequence, 457 residues long: UDP-N-acetylmuramate--L-alanine ligase (457 aa).

109–115 (GTDGKTT) lines the ATP pocket.

This sequence belongs to the MurCDEF family.

The protein resides in the cytoplasm. The catalysed reaction is UDP-N-acetyl-alpha-D-muramate + L-alanine + ATP = UDP-N-acetyl-alpha-D-muramoyl-L-alanine + ADP + phosphate + H(+). Its pathway is cell wall biogenesis; peptidoglycan biosynthesis. Functionally, cell wall formation. This chain is UDP-N-acetylmuramate--L-alanine ligase, found in Thermotoga neapolitana (strain ATCC 49049 / DSM 4359 / NBRC 107923 / NS-E).